A 1422-amino-acid chain; its full sequence is DNA-directed RNA polymerase subunit beta (1422 aa).

The interval 1392 to 1422 is disordered; sequence QAAREAAERDLGGGPLGAPRGAVASGEKSSA.

Belongs to the RNA polymerase beta chain family. In terms of assembly, the RNAP catalytic core consists of 2 alpha, 1 beta, 1 beta' and 1 omega subunit. When a sigma factor is associated with the core the holoenzyme is formed, which can initiate transcription.

The catalysed reaction is RNA(n) + a ribonucleoside 5'-triphosphate = RNA(n+1) + diphosphate. Functionally, DNA-dependent RNA polymerase catalyzes the transcription of DNA into RNA using the four ribonucleoside triphosphates as substrates. This Anaeromyxobacter dehalogenans (strain 2CP-1 / ATCC BAA-258) protein is DNA-directed RNA polymerase subunit beta.